A 207-amino-acid polypeptide reads, in one-letter code: Zinc finger protein 487 (207 aa).

The 43-residue stretch at 1–43 (MLENYSLLLSVGYCITKPEVVCKLEHGQVLWILEEESPSQSHL) folds into the KRAB domain. The segment at 177–202 (KQCFEYNQCGKAFHEEAACSTHKRVC) adopts a C2H2-type; atypical zinc-finger fold.

The protein belongs to the krueppel C2H2-type zinc-finger protein family.

It localises to the nucleus. Functionally, may be involved in transcriptional regulation. In Homo sapiens (Human), this protein is Zinc finger protein 487 (ZNF487).